Consider the following 78-residue polypeptide: Large ribosomal subunit protein bL28 (78 aa).

A disordered region spans residues 1 to 22 (MAKVCQVTGKRPVTGHNVSHAK).

This sequence belongs to the bacterial ribosomal protein bL28 family.

This Saccharophagus degradans (strain 2-40 / ATCC 43961 / DSM 17024) protein is Large ribosomal subunit protein bL28.